The sequence spans 658 residues: Aminopeptidase P1 (658 aa).

Positions 69 and 436 each coordinate a peptide. The Mn(2+) site is built by Asp-456, Asp-467, and His-530. A peptide contacts are provided by His-530, His-539, and Glu-563. Mn(2+) is bound by residues Glu-563 and Glu-577.

The protein belongs to the peptidase M24B family. As to quaternary structure, homodimer. Interacts with N-1-naphthylphthalamic acid (NPA). Interacts with NBCL/BOP2/COCH around the plasma membrane and in the nucleus; this interaction disturbs its regulation of the nuclear transcription factor Y subunit (NF-YA1). Mn(2+) is required as a cofactor. Requires Zn(2+) as cofactor. Expressed at similar levels in shoot apical meristems (SAM), root meristems (RM), root apical meristems (RAM), roots and leaves and, to a slightly lesser degree, in root nodules.

It localises to the nucleus. It is found in the cytoplasm. Its subcellular location is the cell membrane. The protein resides in the microsome membrane. It catalyses the reaction Release of any N-terminal amino acid, including proline, that is linked to proline, even from a dipeptide or tripeptide.. Catalyzes the removal of a penultimate prolyl residue from the N-termini of peptides, such as Arg-Pro-Pro. Aminopeptidase that binds to the auxin transport inhibitor N-1-naphthylphthalamic acid (NPA). May play a negative role in the regulation of PIN auxin transport proteins. Involved in the coordination of the symbiotic nodule developmental program; prevents the formation of root nodules by regulating the expression of the nuclear transcription factor Y subunit (NF-YA1), a key nodulin. This Lotus japonicus (Lotus corniculatus var. japonicus) protein is Aminopeptidase P1.